A 2322-amino-acid chain; its full sequence is Chondroitin sulfate proteoglycan 4 (2322 aa).

The first 29 residues, 1–29, serve as a signal peptide directing secretion; that stretch reads MQSGPRPPLPAPGLALALTLTMLARLASA. Laminin G-like domains follow at residues 30–192 and 202–380; these read ASFF…HEGC and VALG…AAGC. The interval 30–639 is globular or compact configuration stabilized by disulfide bonds; it reads ASFFGENHLE…HRGGPAQDLT (610 aa). The tract at residues 30–639 is neurite growth inhibition; the sequence is ASFFGENHLE…HRGGPAQDLT (610 aa). The Extracellular segment spans residues 30-2224; the sequence is ASFFGENHLE…LSFLEANMFS (2195 aa). Asn-130 carries an N-linked (GlcNAc...) asparagine glycan. Cys-169 and Cys-192 are joined by a disulfide. N-linked (GlcNAc...) asparagine glycosylation occurs at Asn-348. Residues Cys-354 and Cys-380 are joined by a disulfide bond. N-linked (GlcNAc...) asparagine glycosylation is present at Asn-427. CSPG repeat units follow at residues 428–523, 553–645, and 662–764; these read FTQL…LEVS, PHII…VSDG, and AIQI…LEVQ. The interaction with COL6A2 stretch occupies residues 574 to 1040; sequence GPEVFQAYDP…RGGRRLLTTD (467 aa). Residues 631-1446 are interaction with COL5A1; sequence RGGPAQDLTF…SETLTDSFVL (816 aa). N-linked (GlcNAc...) asparagine glycans are attached at residues Asn-685 and Asn-772. 2 CSPG repeats span residues 783-878 and 898-989; these read TVWM…FRVT and DAPV…FVAT. Residue Ser-995 is glycosylated (O-linked (Xyl...) (chondroitin sulfate) serine). 9 CSPG repeats span residues 1018-1110, 1126-1216, 1238-1337, 1356-1449, 1473-1563, 1581-1679, 1704-1803, 1832-1924, and 1941-2029; these read APVQ…VSDG, YLRV…FSVE, PLKL…LDVA, AAIP…LMAN, PPIL…LSDG, LLSL…LQLS, PSHL…FRAH, PPQP…MSDG, and AIEV…VLAL. Asn-1131 and Asn-1202 each carry an N-linked (GlcNAc...) asparagine glycan. Asn-1364 and Asn-1449 each carry an N-linked (GlcNAc...) asparagine glycan. Positions 1586–2221 are neurite growth inhibition; sequence GSQTLTVCPG…GGFLSFLEAN (636 aa). Residues 1587–2221 form a cysteine-containing region; the sequence is SQTLTVCPGS…GGFLSFLEAN (635 aa). Asn-1645 is a glycosylation site (N-linked (GlcNAc...) asparagine). N-linked (GlcNAc...) asparagine glycans are attached at residues Asn-1909, Asn-2016, Asn-2034, Asn-2040, and Asn-2075. The CSPG 15 repeat unit spans residues 2038–2147; sequence VVNVTVRALL…AGDSLTLELW (110 aa). Residues 2182-2206 are disordered; it reads ARTEAGKPESSTPTGEPGPMASSPE. The chain crosses the membrane as a helical span at residues 2225–2245; that stretch reads VIIPMCLVLLLLALILPLLFY. Residues 2246-2322 lie on the Cytoplasmic side of the membrane; it reads LRKRNKTGKH…PALKNGQYWV (77 aa). The residue at position 2252 (Thr-2252) is a Phosphothreonine; by PKC/PRKCA. A PDZ-binding motif is present at residues 2320 to 2322; that stretch reads YWV.

As to quaternary structure, interacts with the first PDZ domain of MPDZ. Interacts with PRKCA. Binds TNC, laminin-1, COL5A1 and COL6A2. Interacts with PLG and angiostatin. Binds FGF2 and PDGFA. Interacts with GRIP1, GRIP2 and GRIA2. Forms a ternary complex with GRIP1 and GRIA2. Interacts with LGALS3 and the integrin composed of ITGB1 and ITGA3. Interacts with ITGA4 through its chondroitin sulfate glycosaminoglycan. Interacts with BCAR1, CDC42 and ACK1. Interacts with MMP16. (Microbial infection) Interacts with C.difficile toxin TcdB, suggesting that it may act as a receptor for TcdB. Post-translationally, O-glycosylated; contains glycosaminoglycan chondroitin sulfate which are required for proper localization and function in stress fiber formation. Involved in interaction with MMP16 and ITGA4. Phosphorylation by PRKCA regulates its subcellular location and function in cell motility. In terms of tissue distribution, detected in fibroblasts (at protein level). Detected in placenta (at protein level). Detected in malignant melanoma cells.

It localises to the cell membrane. It is found in the apical cell membrane. The protein resides in the cell projection. The protein localises to the lamellipodium membrane. Its subcellular location is the cell surface. Its function is as follows. Proteoglycan playing a role in cell proliferation and migration which stimulates endothelial cells motility during microvascular morphogenesis. May also inhibit neurite outgrowth and growth cone collapse during axon regeneration. Cell surface receptor for collagen alpha 2(VI) which may confer cells ability to migrate on that substrate. Binds through its extracellular N-terminus growth factors, extracellular matrix proteases modulating their activity. May regulate MPP16-dependent degradation and invasion of type I collagen participating in melanoma cells invasion properties. May modulate the plasminogen system by enhancing plasminogen activation and inhibiting angiostatin. Also functions as a signal transducing protein by binding through its cytoplasmic C-terminus scaffolding and signaling proteins. May promote retraction fiber formation and cell polarization through Rho GTPase activation. May stimulate alpha-4, beta-1 integrin-mediated adhesion and spreading by recruiting and activating a signaling cascade through CDC42, ACK1 and BCAR1. May activate FAK and ERK1/ERK2 signaling cascades. In Homo sapiens (Human), this protein is Chondroitin sulfate proteoglycan 4 (CSPG4).